We begin with the raw amino-acid sequence, 468 residues long: Protein NEN1 (468 aa).

One can recognise an Exonuclease domain in the interval 11–172 (FFDVETTVPK…DDVRMNLEVL (162 aa)). Positions 13 and 15 each coordinate Mg(2+). Histidine 159 (proton donor/acceptor) is an active-site residue. Mg(2+) is bound at residue aspartate 164.

Mg(2+) is required as a cofactor. As to expression, expressed in the sieve elements and phloem pole pericycle cells.

Its subcellular location is the cytoplasm. The protein localises to the nucleus. In terms of biological role, probable exonuclease involved in enuclation of sieve elements. This Arabidopsis thaliana (Mouse-ear cress) protein is Protein NEN1.